An 885-amino-acid chain; its full sequence is MERHFVFIATYLLIFHLVQAQNQTGFISVDCGLSLLESPYDAPQTGLTYTSDADLVASGKTGRLAKEFEPLVDKPTLTLRYFPEGVRNCYNLNVTSDTNYLIKATFVYGNYDGLNVGPNFNLYLGPNLWTTVSSNDTIEEIILVTRSNSLQVCLVKTGISIPFINMLELRPMKKNMYVTQSGSLKYLFRGYISNSSTRIRFPDDVYDRKWYPLFDDSWTQVTTNLKVNTSITYELPQSVMAKAATPIKANDTLNITWTVEPPTTQFYSYVHIAEIQALRANETREFNVTLNGEYTFGPFSPIPLKTASIVDLSPGQCDGGRCILQVVKTLKSTLPPLLNAIEAFTVIDFPQMETNENDVAGIKNVQGTYGLSRISWQGDPCVPKQLLWDGLNCKNSDISTPPIITSLDLSSSGLTGIITQAIKNLTHLQILDLSDNNLTGEVPEFLADIKSLLVINLSGNNLSGSVPPSLLQKKGMKLNVEGNPHILCTTGSCVKKKEDGHKKKSVIVPVVASIASIAVLIGALVLFLILRKKRSPKVEGPPPSYMQASDGRLPRSSEPAIVTKNRRFSYSQVVIMTNNFQRILGKGGFGMVYHGFVNGTEQVAVKILSHSSSQGYKQFKAEVELLLRVHHKNLVGLVGYCDEGDNLALIYEYMANGDLKEHMSGTRNRFILNWGTRLKIVIESAQGLEYLHNGCKPPMVHRDVKTTNILLNEHFEAKLADFGLSRSFLIEGETHVSTVVAGTPGYLDPEYHRTNWLTEKSDVYSFGILLLEIITNRHVIDQSREKPHIGEWVGVMLTKGDIQSIMDPSLNEDYDSGSVWKAVELAMSCLNHSSARRPTMSQVVIELNECLASENARGGASRDMESKSSIEVSLTFGTEVSPNAR.

Positions 1-20 (MERHFVFIATYLLIFHLVQA) are cleaved as a signal peptide. Residues 21-509 (QNQTGFISVD…GHKKKSVIVP (489 aa)) lie on the Extracellular side of the membrane. Asparagine 22, asparagine 93, asparagine 135, asparagine 194, asparagine 228, asparagine 250, asparagine 254, asparagine 281, asparagine 287, asparagine 424, asparagine 437, asparagine 456, and asparagine 461 each carry an N-linked (GlcNAc...) asparagine glycan. LRR repeat units follow at residues 403–424 (IITS…AIKN), 427–447 (HLQI…EFLA), and 451–473 (SLLV…LLQK). Residues 510 to 530 (VVASIASIAVLIGALVLFLIL) form a helical membrane-spanning segment. Residues 531–885 (RKKRSPKVEG…FGTEVSPNAR (355 aa)) are Cytoplasmic-facing. The 274-residue stretch at 578-851 (NNFQRILGKG…QVVIELNECL (274 aa)) folds into the Protein kinase domain. Residues 584–592 (LGKGGFGMV) and lysine 606 contribute to the ATP site. Tyrosine 651 is modified (phosphotyrosine). The Proton acceptor role is filled by aspartate 703. Position 737 is a phosphoserine (serine 737). Phosphothreonine occurs at positions 738 and 743. Position 751 is a phosphotyrosine (tyrosine 751).

The protein belongs to the protein kinase superfamily. Ser/Thr protein kinase family.

The protein resides in the membrane. The enzyme catalyses L-seryl-[protein] + ATP = O-phospho-L-seryl-[protein] + ADP + H(+). The catalysed reaction is L-threonyl-[protein] + ATP = O-phospho-L-threonyl-[protein] + ADP + H(+). This Arabidopsis thaliana (Mouse-ear cress) protein is Probable LRR receptor-like serine/threonine-protein kinase At1g51820.